Consider the following 377-residue polypeptide: UPF0425 pyridoxal phosphate-dependent protein MTH_1914 (377 aa).

Position 207 is an N6-(pyridoxal phosphate)lysine (lysine 207).

This sequence belongs to the UPF0425 family. Pyridoxal 5'-phosphate serves as cofactor.

The chain is UPF0425 pyridoxal phosphate-dependent protein MTH_1914 from Methanothermobacter thermautotrophicus (strain ATCC 29096 / DSM 1053 / JCM 10044 / NBRC 100330 / Delta H) (Methanobacterium thermoautotrophicum).